The primary structure comprises 660 residues: Rhamnogalacturonate lyase B (660 aa).

The N-terminal stretch at 1-18 (MRLGVCFSLAAAASVARA) is a signal peptide. 4 N-linked (GlcNAc...) asparagine glycosylation sites follow: Asn-25, Asn-109, Asn-142, and Asn-284. A disordered region spans residues 446–466 (RLGTPDKSSGEFRHGAARDPT). Residues 453 to 466 (SSGEFRHGAARDPT) show a composition bias toward basic and acidic residues. N-linked (GlcNAc...) asparagine glycosylation is found at Asn-524, Asn-566, and Asn-635.

It belongs to the polysaccharide lyase 4 family.

The protein resides in the secreted. The enzyme catalyses Endotype eliminative cleavage of L-alpha-rhamnopyranosyl-(1-&gt;4)-alpha-D-galactopyranosyluronic acid bonds of rhamnogalacturonan I domains in ramified hairy regions of pectin leaving L-rhamnopyranose at the reducing end and 4-deoxy-4,5-unsaturated D-galactopyranosyluronic acid at the non-reducing end.. In terms of biological role, pectinolytic enzymes consist of four classes of enzymes: pectin lyase, polygalacturonase, pectin methylesterase and rhamnogalacturonase. Degrades the rhamnogalacturonan I (RG-I) backbone of pectin. Active against linseed rhamnogalacturonan. The protein is Rhamnogalacturonate lyase B (rglB) of Emericella nidulans (strain FGSC A4 / ATCC 38163 / CBS 112.46 / NRRL 194 / M139) (Aspergillus nidulans).